Here is a 491-residue protein sequence, read N- to C-terminus: Galactose-1-phosphate uridylyltransferase (491 aa).

Belongs to the galactose-1-phosphate uridylyltransferase type 2 family.

The protein localises to the cytoplasm. The enzyme catalyses alpha-D-galactose 1-phosphate + UDP-alpha-D-glucose = alpha-D-glucose 1-phosphate + UDP-alpha-D-galactose. It participates in carbohydrate metabolism; galactose metabolism. The chain is Galactose-1-phosphate uridylyltransferase (galT) from Streptococcus mutans serotype c (strain ATCC 700610 / UA159).